Here is a 389-residue protein sequence, read N- to C-terminus: Glutamate 5-kinase (389 aa).

K17 lines the ATP pocket. Residues S57, D144, and N156 each coordinate substrate. Residue 176–177 coordinates ATP; sequence SD. One can recognise a PUA domain in the interval 282–359; that stretch reads AGEIHVDAGA…NEIETILGYV (78 aa).

The protein belongs to the glutamate 5-kinase family.

The protein resides in the cytoplasm. The catalysed reaction is L-glutamate + ATP = L-glutamyl 5-phosphate + ADP. It functions in the pathway amino-acid biosynthesis; L-proline biosynthesis; L-glutamate 5-semialdehyde from L-glutamate: step 1/2. Catalyzes the transfer of a phosphate group to glutamate to form L-glutamate 5-phosphate. The protein is Glutamate 5-kinase of Agrobacterium fabrum (strain C58 / ATCC 33970) (Agrobacterium tumefaciens (strain C58)).